We begin with the raw amino-acid sequence, 260 residues long: tRNA pseudouridine synthase B (260 aa).

His44 serves as a coordination point for substrate. Asp49 (nucleophile) is an active-site residue. The substrate site is built by Tyr77, Tyr180, and Leu201.

It belongs to the pseudouridine synthase TruB family. Type 1 subfamily.

The enzyme catalyses uridine(55) in tRNA = pseudouridine(55) in tRNA. Its function is as follows. Responsible for synthesis of pseudouridine from uracil-55 in the psi GC loop of transfer RNAs. The chain is tRNA pseudouridine synthase B from Blochmanniella pennsylvanica (strain BPEN).